The chain runs to 596 residues: Cis-3-hydroxy-L-proline dehydratase (596 aa).

The active-site Proton acceptor is the Ser-67.

Belongs to the AcnX family. Monomer. Fe(3+) is required as a cofactor.

The enzyme catalyses cis-3-hydroxy-L-proline = 1-pyrroline-2-carboxylate + H2O. Inhibited by Zn(2+). Not inhibited by pyrrole-2-carboxylate nor its derivative 2-thiophenecarboxylate. Catalyzes the dehydration of cis-3-hydroxy-L-proline (c3LHyp) to Delta(1)-pyrroline-2-carboxylate (Pyr2C). No activity with L-proline, trans-4-hydroxy-L-proline (t4LHyp), cis-4-hydroxy-L-proline (c4LHyp), trans-3-hydroxy-L-proline (t3LHyp), D-proline, cis-4-hydroxy-D-proline (c4DHyp), trans-4-hydroxy-D-proline (t4DHyp) or L-serine as substrates. Because of the low catalytic efficiency, C3LHyp is likely not a main physiological substrate of this enzyme in H.jecorina. This chain is Cis-3-hydroxy-L-proline dehydratase, found in Hypocrea jecorina (strain QM6a) (Trichoderma reesei).